Reading from the N-terminus, the 384-residue chain is Potassium channel subfamily K member 18 (384 aa).

At 1–23 the chain is on the cytoplasmic side; sequence MEVSGHPQARRCCPEALGKLFPG. The chain crosses the membrane as a helical span at residues 24–44; that stretch reads LCFLCFLVTYALVGAVVFSAI. The N-linked (GlcNAc...) asparagine glycan is linked to asparagine 70. The segment at residues 103-129 is an intramembrane region (pore-forming); it reads FLSSLFFCCTVFSTVGYGYIYPVTRLG. K(+) contacts are provided by threonine 116, valine 117, glycine 118, and tyrosine 119. The selectivity filter 1 stretch occupies residues 116 to 121; that stretch reads TVGYGY. Residues 130–148 form a helical membrane-spanning segment; the sequence is KYLCMLYALFGIPLMFLVL. Residues 149 to 280 are Cytoplasmic-facing; that stretch reads TDTGDILATI…EVGQQVERLD (132 aa). Positions 200-205 are interaction with calcineurin; sequence PQIIIS. The tract at residues 249-254 is interaction with YWHAH; it reads RSNSCP. Phosphoserine occurs at positions 252 and 264. The chain crosses the membrane as a helical span at residues 281–301; it reads IPLPIIALIVFAYISCAAAIL. The segment at residues 314–328 is an intramembrane region (pore-forming); the sequence is FYFCFVTLTTIGFGD. A selectivity filter 2 region spans residues 323-328; it reads TIGFGD. A helical transmembrane segment spans residues 335 to 355; sequence NFFLFFSIYIIVGMEIVFIAF. At 356–384 the chain is on the cytoplasmic side; it reads KLVQNRLIDIYKNVMLFFAKGKFYHLVKK.

The protein belongs to the two pore domain potassium channel (TC 1.A.1.8) family. Homodimer. Heterodimer with KCNK2. Heterodimer with KCNK10. Interacts with calcineurin. Interacts with YWHAH, in a phosphorylation-dependent manner. In terms of processing, N-glycosylated. Post-translationally, phosphorylation of Ser-264 is required for the binding of 14-3-3eta/YWHAH. Calcineurin-mediated dephosphorylation enhances channel activity. As to expression, expressed in dorsal root ganglion and trigeminal ganglion neurons. Detected at low levels in spinal cord. Expressed in regulatory T cells (at protein level).

It localises to the cell membrane. The catalysed reaction is K(+)(in) = K(+)(out). With respect to regulation, activated by volatile anesthetics but inhibited by amide local anesthetics. Inhibited by Ba(2+) ions. Inhibited by free polyunsaturated fatty acids. Channel conductance is sensitive to intracellular pH, it decreases at acidic pH and increases at basic pH. In contrast to its mouse ortholog, it is not regulated by extracellular protons. Insensitive to changes in temperature. Its function is as follows. K(+) channel that conducts outward and inward rectifying currents at depolarized and hyperpolarized membrane potentials, respectively. The outward rectifying currents are voltage-dependent, coupled to K(+) electrochemical gradient across the membrane, whereas the inward currents can be induced in response to activation of Ca(2+)-mobilizing receptors. Homo- and heterodimerizes to form functional channels with distinct regulatory and gating properties. In trigeminal ganglia sensory neurons, the heterodimers of KCNK18/TRESK and KCNK2/TREK-1 or KCNK10/TREK-2 inhibit neuronal firing and neurogenic inflammation by stabilizing the resting membrane potential at K(+) equilibrium potential as well as by regulating the threshold of action potentials and the spike frequency. In thymocytes, conducts K(+) currents upon T cell receptor (TCR) signaling leading to sustained Ca(2+) influx and NF-kappa-B activation, FOXP3 transcription and positive selection of regulatory T cell (Treg) progenitor subsets. Appears to mediate the analgesics effects of hydroxy-alpha-sanshool, a metabolite naturally present in Schezuan pepper and other Xanthoxylum plants. This is Potassium channel subfamily K member 18 from Homo sapiens (Human).